The primary structure comprises 325 residues: Iodotyrosine dehalogenase 1 homolog (325 aa).

Residues V42–L62 form a helical membrane-spanning segment. Over L63–Y325 the chain is Cytoplasmic. FMN contacts are provided by residues R135–R139, S163–V164, V273–S275, and R315.

Belongs to the nitroreductase family. It depends on FMN as a cofactor. In terms of tissue distribution, expressed in body-wall, anal depressor and vulval muscles.

The protein resides in the membrane. May contribute to coordination of muscle contraction as regulatory subunit of the nonessential sup-9 potassium channel complex. May act downstream of sup-10. This is Iodotyrosine dehalogenase 1 homolog from Caenorhabditis elegans.